The chain runs to 361 residues: 5-formaminoimidazole-4-carboxamide-1-(beta)-D-ribofuranosyl 5'-monophosphate synthetase (361 aa).

Residues His-27 and Ser-94 each coordinate 5-amino-1-(5-phospho-beta-D-ribosyl)imidazole-4-carboxamide. An ATP-grasp domain is found at 116–348 (RAILRWEAER…MGQRIAKEIK (233 aa)). ATP is bound by residues 146–208 (PDDI…ANYC) and Glu-230. Asn-258 provides a ligand contact to 5-amino-1-(5-phospho-beta-D-ribosyl)imidazole-4-carboxamide. Mg(2+) contacts are provided by Gln-297 and Glu-310.

The protein belongs to the phosphohexose mutase family. Mg(2+) serves as cofactor. Mn(2+) is required as a cofactor.

It carries out the reaction 5-amino-1-(5-phospho-beta-D-ribosyl)imidazole-4-carboxamide + formate + ATP = 5-formamido-1-(5-phospho-D-ribosyl)imidazole-4-carboxamide + ADP + phosphate. The protein operates within purine metabolism; IMP biosynthesis via de novo pathway; 5-formamido-1-(5-phospho-D-ribosyl)imidazole-4-carboxamide from 5-amino-1-(5-phospho-D-ribosyl)imidazole-4-carboxamide (formate route): step 1/1. Catalyzes the ATP- and formate-dependent formylation of 5-aminoimidazole-4-carboxamide-1-beta-d-ribofuranosyl 5'-monophosphate (AICAR) to 5-formaminoimidazole-4-carboxamide-1-beta-d-ribofuranosyl 5'-monophosphate (FAICAR) in the absence of folates. This Methanococcus maripaludis (strain C5 / ATCC BAA-1333) protein is 5-formaminoimidazole-4-carboxamide-1-(beta)-D-ribofuranosyl 5'-monophosphate synthetase.